Consider the following 692-residue polypeptide: Proprotein convertase subtilisin/kexin type 9 (692 aa).

A signal peptide spans 1–30 (MGTVSSRRSWWPLPLLLLLLLLLGPAGARA). A propeptide spanning residues 31–152 (QEDEDGDYEE…IEEDSSVFAQ (122 aa)) is cleaved from the precursor. Tyr38 is modified (sulfotyrosine). Residue Ser47 is modified to Phosphoserine. The region spanning 77–149 (TYVVVLKEET…VDYIEEDSSV (73 aa)) is the Inhibitor I9 domain. Residues 155–461 (PWNLERITPP…GWQLFCRTVW (307 aa)) enclose the Peptidase S8 domain. Residues Asp186 and His226 each act as charge relay system in the active site. Disulfide bonds link Cys223/Cys255 and Cys323/Cys358. The active-site Charge relay system is the Ser386. Positions 450–692 (GAGWQLFCRT…HLAQASQELQ (243 aa)) are C-terminal domain. 3 disulfides stabilise this stretch: Cys457/Cys527, Cys477/Cys526, and Cys486/Cys509. An N-linked (GlcNAc...) asparagine glycan is attached at Asn533. 6 cysteine pairs are disulfide-bonded: Cys534-Cys601, Cys552-Cys600, Cys562-Cys588, Cys608-Cys679, Cys626-Cys678, and Cys635-Cys654. Residue Ser688 is modified to Phosphoserine.

This sequence belongs to the peptidase S8 family. In terms of assembly, monomer. Can self-associate to form dimers and higher multimers which may have increased LDLR degrading activity. The precursor protein but not the mature protein may form multimers. Interacts with APOB, VLDLR, LRP8/APOER2 and BACE1. The full-length immature form (pro-PCSK9) interacts with SCNN1A, SCNN1B and SCNN1G. The pro-PCSK9 form (via C-terminal domain) interacts with LDLR. Interacts (via the C-terminal domain) with ANXA2 (via repeat Annexin 1); the interaction inhibits the degradation of LDLR. Requires Ca(2+) as cofactor. In terms of processing, cleavage by furin and PCSK5 generates a truncated inactive protein that is unable to induce LDLR degradation. Post-translationally, undergoes autocatalytic cleavage in the endoplasmic reticulum to release the propeptide from the N-terminus and the cleavage of the propeptide is strictly required for its maturation and activation. The cleaved propeptide however remains associated with the catalytic domain through non-covalent interactions, preventing potential substrates from accessing its active site. As a result, it is secreted from cells as a propeptide-containing, enzymatically inactive protein. Phosphorylation protects the propeptide against proteolysis.

It localises to the cytoplasm. The protein localises to the secreted. The protein resides in the endosome. It is found in the lysosome. Its subcellular location is the cell surface. It localises to the endoplasmic reticulum. The protein localises to the golgi apparatus. Its activity is regulated as follows. Its proteolytic activity is autoinhibited by the non-covalent binding of the propeptide to the catalytic domain. Inhibited by EGTA. Functionally, crucial player in the regulation of plasma cholesterol homeostasis. Binds to low-density lipid receptor family members: low density lipoprotein receptor (LDLR), very low density lipoprotein receptor (VLDLR), apolipoprotein E receptor (LRP1/APOER) and apolipoprotein receptor 2 (LRP8/APOER2), and promotes their degradation in intracellular acidic compartments. Acts via a non-proteolytic mechanism to enhance the degradation of the hepatic LDLR through a clathrin LDLRAP1/ARH-mediated pathway. May prevent the recycling of LDLR from endosomes to the cell surface or direct it to lysosomes for degradation. Can induce ubiquitination of LDLR leading to its subsequent degradation. Inhibits intracellular degradation of APOB via the autophagosome/lysosome pathway in a LDLR-independent manner. Involved in the disposal of non-acetylated intermediates of BACE1 in the early secretory pathway. Inhibits epithelial Na(+) channel (ENaC)-mediated Na(+) absorption by reducing ENaC surface expression primarily by increasing its proteasomal degradation. Regulates neuronal apoptosis via modulation of LRP8/APOER2 levels and related anti-apoptotic signaling pathways. The chain is Proprotein convertase subtilisin/kexin type 9 (PCSK9) from Pan paniscus (Pygmy chimpanzee).